The sequence spans 121 residues: Small ribosomal subunit protein uS13 (121 aa).

A disordered region spans residues Leu-95–Lys-121.

Belongs to the universal ribosomal protein uS13 family. In terms of assembly, part of the 30S ribosomal subunit. Forms a loose heterodimer with protein S19. Forms two bridges to the 50S subunit in the 70S ribosome.

Located at the top of the head of the 30S subunit, it contacts several helices of the 16S rRNA. In the 70S ribosome it contacts the 23S rRNA (bridge B1a) and protein L5 of the 50S subunit (bridge B1b), connecting the 2 subunits; these bridges are implicated in subunit movement. Contacts the tRNAs in the A and P-sites. In Polaromonas naphthalenivorans (strain CJ2), this protein is Small ribosomal subunit protein uS13.